Consider the following 193-residue polypeptide: Xanthine phosphoribosyltransferase (193 aa).

Xanthine is bound by residues leucine 20 and asparagine 27. 128–132 (ANGEA) provides a ligand contact to 5-phospho-alpha-D-ribose 1-diphosphate. Lysine 156 lines the xanthine pocket.

Belongs to the purine/pyrimidine phosphoribosyltransferase family. Xpt subfamily. In terms of assembly, homodimer.

It is found in the cytoplasm. It catalyses the reaction XMP + diphosphate = xanthine + 5-phospho-alpha-D-ribose 1-diphosphate. It functions in the pathway purine metabolism; XMP biosynthesis via salvage pathway; XMP from xanthine: step 1/1. Its function is as follows. Converts the preformed base xanthine, a product of nucleic acid breakdown, to xanthosine 5'-monophosphate (XMP), so it can be reused for RNA or DNA synthesis. This Exiguobacterium sp. (strain ATCC BAA-1283 / AT1b) protein is Xanthine phosphoribosyltransferase.